The sequence spans 150 residues: Large ribosomal subunit protein bL9 (150 aa).

It belongs to the bacterial ribosomal protein bL9 family.

In terms of biological role, binds to the 23S rRNA. The chain is Large ribosomal subunit protein bL9 from Herminiimonas arsenicoxydans.